The chain runs to 196 residues: Superantigen-like protein 11 (196 aa).

The segment at Leu-65–Tyr-167 is sialyl Lewis X-binding.

The protein belongs to the staphylococcal/streptococcal toxin family. Homodimer (via its C-terminal domain). Interacts with host FCAR and SELPLG (via sialyl Lewis X).

The protein resides in the secreted. Functionally, secreted protein that plays a role in the inhibition of host immune system. Targets myeloid cells such as monocytes or granulocytes through binding with sialyllactosamine-containing glycoproteins. Prevents initial rolling of neutrophils toward the site of infection by interacting with host SELPLG. Disrupts neutrophil motility by induction of cell adhesion via interacting with glycans but independently of SELPLG. The protein is Superantigen-like protein 11 of Staphylococcus aureus.